The primary structure comprises 379 residues: Glucose-1-phosphate adenylyltransferase (379 aa).

Residues G164, 179–180 (EK), and S190 each bind alpha-D-glucose 1-phosphate.

It belongs to the bacterial/plant glucose-1-phosphate adenylyltransferase family. Homotetramer.

The enzyme catalyses alpha-D-glucose 1-phosphate + ATP + H(+) = ADP-alpha-D-glucose + diphosphate. It functions in the pathway glycan biosynthesis; glycogen biosynthesis. In terms of biological role, involved in the biosynthesis of ADP-glucose, a building block required for the elongation reactions to produce glycogen. Catalyzes the reaction between ATP and alpha-D-glucose 1-phosphate (G1P) to produce pyrophosphate and ADP-Glc. In Streptococcus equi subsp. zooepidemicus (strain H70), this protein is Glucose-1-phosphate adenylyltransferase.